A 399-amino-acid polypeptide reads, in one-letter code: Tryptophan synthase beta chain (399 aa).

An N6-(pyridoxal phosphate)lysine modification is found at Lys-92.

This sequence belongs to the TrpB family. As to quaternary structure, tetramer of two alpha and two beta chains. Requires pyridoxal 5'-phosphate as cofactor.

It catalyses the reaction (1S,2R)-1-C-(indol-3-yl)glycerol 3-phosphate + L-serine = D-glyceraldehyde 3-phosphate + L-tryptophan + H2O. The protein operates within amino-acid biosynthesis; L-tryptophan biosynthesis; L-tryptophan from chorismate: step 5/5. Its function is as follows. The beta subunit is responsible for the synthesis of L-tryptophan from indole and L-serine. This is Tryptophan synthase beta chain from Exiguobacterium sibiricum (strain DSM 17290 / CCUG 55495 / CIP 109462 / JCM 13490 / 255-15).